The following is a 73-amino-acid chain: Large ribosomal subunit protein uL30 (73 aa).

It belongs to the universal ribosomal protein uL30 family. Part of the 50S ribosomal subunit.

The chain is Large ribosomal subunit protein uL30 from Borrelia hermsii (strain HS1 / DAH).